A 274-amino-acid polypeptide reads, in one-letter code: MQFSKMHGLGNDFMVVDAVTQNVFFSPELIRRLADRHVGVGFDQLLVVEPPYDPDLDFHYRIFNADGSEVSQCGNGARCFARFVRLKGLTNKRDICVSTANGRMILSVTDDELVRVNMGEPNFEPSAVPFRAIKAEKTYIMRASEQTVLCGVVSMGNPHCVIQVDDVDTAAVEILGPIMESHERFPERANIGFMQVMKREHIRLRVYERGAGETRACGSGACAAVAVGISQGLLAEEVRVELPGGRLDIAWKGPGHPLFMTGPAAHVYDGFIHL.

Residues N11, Q44, and N64 each contribute to the substrate site. Catalysis depends on C73, which acts as the Proton donor. Substrate contacts are provided by residues 74-75, N157, N190, and 208-209; these read GN and ER. C217 (proton acceptor) is an active-site residue. 218–219 lines the substrate pocket; that stretch reads GS.

Belongs to the diaminopimelate epimerase family. As to quaternary structure, homodimer.

The protein localises to the cytoplasm. The catalysed reaction is (2S,6S)-2,6-diaminopimelate = meso-2,6-diaminopimelate. The protein operates within amino-acid biosynthesis; L-lysine biosynthesis via DAP pathway; DL-2,6-diaminopimelate from LL-2,6-diaminopimelate: step 1/1. Catalyzes the stereoinversion of LL-2,6-diaminopimelate (L,L-DAP) to meso-diaminopimelate (meso-DAP), a precursor of L-lysine and an essential component of the bacterial peptidoglycan. This Enterobacter sp. (strain 638) protein is Diaminopimelate epimerase.